The following is a 361-amino-acid chain: Putative agmatine deiminase (361 aa).

C354 serves as the catalytic Amidino-cysteine intermediate.

It belongs to the agmatine deiminase family.

It carries out the reaction agmatine + H2O = N-carbamoylputrescine + NH4(+). The sequence is that of Putative agmatine deiminase from Streptococcus pneumoniae (strain ATCC 700669 / Spain 23F-1).